A 145-amino-acid polypeptide reads, in one-letter code: Neuromedin-S (145 aa).

The signal sequence occupies residues 1-25 (MKYLAQFPSILAIYCFCLLQIPSSG). Propeptides lie at residues 26–64 (FPRP…IYKR), 65–100 (FLFH…ADRR), and 101–103 (MKT). N136 carries the post-translational modification Asparagine amide. Positions 139–145 (NLDFDTW) are excised as a propeptide.

The protein belongs to the NmU family.

It is found in the secreted. Functionally, implicated in the regulation of circadian rhythms through autocrine and/or paracrine actions. This Bos taurus (Bovine) protein is Neuromedin-S (NMS).